Reading from the N-terminus, the 107-residue chain is Regulatory protein SoxS (107 aa).

An HTH araC/xylS-type domain is found at Gln8 to Arg106. 2 consecutive DNA-binding regions (H-T-H motif) follow at residues Asp25–Thr46 and Ile73–Phe96.

It is found in the cytoplasm. In terms of biological role, transcriptional activator of the superoxide response regulon of E.coli that includes at least 10 genes such as sodA, nfo, zwf and micF. Binds the DNA sequence 5'-GCACN(7)CAA-3'. It also facilitates the subsequent binding of RNA polymerase to the micF and the nfo promoters. This Escherichia coli O157:H7 protein is Regulatory protein SoxS (soxS).